A 294-amino-acid chain; its full sequence is Shikimate dehydrogenase (NADP(+)) (294 aa).

Residues 14–16 (SKS) and threonine 61 contribute to the shikimate site. The Proton acceptor role is filled by lysine 65. Aspartate 77 contacts NADP(+). The shikimate site is built by asparagine 86 and aspartate 102. NADP(+) is bound by residues 140–144 (GSGGA) and leucine 235. Tyrosine 237 provides a ligand contact to shikimate. Glycine 259 serves as a coordination point for NADP(+).

Belongs to the shikimate dehydrogenase family. Homodimer.

It carries out the reaction shikimate + NADP(+) = 3-dehydroshikimate + NADPH + H(+). It participates in metabolic intermediate biosynthesis; chorismate biosynthesis; chorismate from D-erythrose 4-phosphate and phosphoenolpyruvate: step 4/7. Its function is as follows. Involved in the biosynthesis of the chorismate, which leads to the biosynthesis of aromatic amino acids. Catalyzes the reversible NADPH linked reduction of 3-dehydroshikimate (DHSA) to yield shikimate (SA). In Blochmanniella floridana, this protein is Shikimate dehydrogenase (NADP(+)).